A 788-amino-acid polypeptide reads, in one-letter code: Protein kintoun (788 aa).

Disordered stretches follow at residues 194–249 (LRKP…SEQD), 415–438 (NNSE…EISP), and 628–754 (HKEH…SSSV). Residues 225 to 241 (GKEKKDQKRVIKEEHKQ) show a composition bias toward basic and acidic residues. Over residues 417-427 (SEGLTSESNLD) the composition is skewed to polar residues. Basic and acidic residues-rich tracts occupy residues 628–644 (HKEH…DVGV) and 667–682 (ENTE…RYEE). Composition is skewed to polar residues over residues 685-701 (STSC…QKDS) and 744-754 (NFDSRPASSSV).

The protein belongs to the PIH1 family. Kintoun subfamily.

It localises to the cytoplasm. Its subcellular location is the dynein axonemal particle. Its function is as follows. Required for cytoplasmic pre-assembly of axonemal dyneins, thereby playing a central role in motility in cilia and flagella. Involved in pre-assembly of dynein arm complexes in the cytoplasm before intraflagellar transport loads them for the ciliary compartment. This chain is Protein kintoun, found in Xenopus laevis (African clawed frog).